The following is a 671-amino-acid chain: Phosphoenolpyruvate carboxykinase (ATP) 1 (671 aa).

Residues 1–10 are compositionally biased toward low complexity; that stretch reads MSAGNGNATN. The disordered stretch occupies residues 1–44; that stretch reads MSAGNGNATNGDGGFSFPKGPVMPKITTGAAKRGSGVCHDDSGP. Ser2 is modified (N-acetylserine). Ser62 is modified (phosphoserine). Thr66 is modified (phosphothreonine). The segment at 100 to 127 is disordered; the sequence is TRESGPKVVRGDPAEKKTDGSTTPAYAH. Positions 108-118 are enriched in basic and acidic residues; sequence VRGDPAEKKTD. Position 189 (Arg189) interacts with substrate. 2 residues coordinate Ca(2+): His270 and Asn271. Residues Tyr328 and Lys334 each coordinate substrate. ATP is bound by residues Lys334, His353, and 369–377; that span reads GLSGTGKTT. Residues Lys334 and His353 each coordinate Mn(2+). Residue Asp390 coordinates Mn(2+). Gly404 contacts Ca(2+). ATP is bound by residues Glu418, Arg455, 574–575, Ile575, and Thr580; that span reads RI. Arg455 contributes to the substrate binding site.

The protein belongs to the phosphoenolpyruvate carboxykinase (ATP) family. Monomer. Requires Mn(2+) as cofactor. Expressed in cotyledons, flowers, siliques, seeds, leaves, stems and roots. Localized in mid-veins.

Its subcellular location is the cytoplasm. It carries out the reaction oxaloacetate + ATP = phosphoenolpyruvate + ADP + CO2. The protein operates within carbohydrate biosynthesis; gluconeogenesis. With respect to regulation, allosterically activated by calcium. It may represent the only case of a monomeric, allosteric enzyme. Involved in the gluconeogenesis. Catalyzes the conversion of oxaloacetate (OAA) to phosphoenolpyruvate (PEP) through direct phosphoryl transfer between the nucleoside triphosphate and OAA. The sequence is that of Phosphoenolpyruvate carboxykinase (ATP) 1 from Arabidopsis thaliana (Mouse-ear cress).